A 986-amino-acid chain; its full sequence is Ephrin type-A receptor 4 (986 aa).

Positions 1-19 (MAGIFYFILFSFLFGICDA) are cleaved as a signal peptide. The Extracellular portion of the chain corresponds to 20-547 (VTGSRVYPAN…RIIGDGANST (528 aa)). An Eph LBD domain is found at 30–209 (EVTLLDSRSV…FYKKCPLTVR (180 aa)). 3 N-linked (GlcNAc...) asparagine glycosylation sites follow: N235, N340, and N408. Fibronectin type-III domains lie at 328-439 (PPSA…TNQA) and 440-537 (APSS…TVPS). Residues 548-569 (VLLVSVSGSVVLVVILIAAFVI) traverse the membrane as a helical segment. The Cytoplasmic portion of the chain corresponds to 570 to 986 (SRRRSKYSKA…QQMHGRMVPV (417 aa)). Residues Y596 and Y602 each carry the phosphotyrosine; by autocatalysis modification. A Protein kinase domain is found at 621–882 (IKIEKVIGVG…QIVNMLDKLI (262 aa)). ATP contacts are provided by residues 627 to 635 (IGVGEFGEV) and K653. Catalysis depends on D746, which acts as the Proton acceptor. Phosphotyrosine; by autocatalysis is present on residues Y779 and Y928. Positions 911–975 (SAVVSVGDWL…LSSVQAMRTQ (65 aa)) constitute an SAM domain. The short motif at 984 to 986 (VPV) is the PDZ-binding element.

Belongs to the protein kinase superfamily. Tyr protein kinase family. Ephrin receptor subfamily. Heterotetramer upon binding of the ligand. The heterotetramer is composed of an ephrin dimer and a receptor dimer. Oligomerization is probably required to induce biological responses. Interacts (phosphorylated at position Tyr-602) with FYN. Interacts (via PDZ motif) with SIPA1L1 (via PDZ domain); controls neuronal morphology through regulation of the RAP1 (RAP1A or RAP1B) and RAP2 (RAP2A, RAP2B or RAP2C) GTPases. Interacts with CDK5, CDK5R1 and NGEF; upon activation by EFNA1 induces NGEF phosphorylation by the kinase CDK5. Interacts with CHN1; effector of EPHA4 in axon guidance linking EPHA4 activation to RAC1 regulation. Forms a ternary complex composed of ADAM10, CADH1 and EPHA4; within the complex, CADH1 is cleaved by ADAM10 which disrupts adherens junctions. In terms of tissue distribution, expressed in inner and outer pillar cells of the organ of Corti (at protein level). Highest expression in the adult brain and retina and also detectable in kidney, lung, skeletal muscle and thymus. Not detected in heart and liver. Expressed in myogenic progenitor cells.

It is found in the cell membrane. Its subcellular location is the cell projection. The protein localises to the axon. The protein resides in the dendrite. It localises to the postsynaptic density membrane. It is found in the early endosome. Its subcellular location is the cell junction. The protein localises to the adherens junction. It catalyses the reaction L-tyrosyl-[protein] + ATP = O-phospho-L-tyrosyl-[protein] + ADP + H(+). Functionally, receptor tyrosine kinase which binds membrane-bound ephrin family ligands residing on adjacent cells, leading to contact-dependent bidirectional signaling into neighboring cells. The signaling pathway downstream of the receptor is referred to as forward signaling while the signaling pathway downstream of the ephrin ligand is referred to as reverse signaling. Highly promiscuous, it has the unique property among Eph receptors to bind and to be physiologically activated by both GPI-anchored ephrin-A and transmembrane ephrin-B ligands including EFNA1 and EFNB3. Upon activation by ephrin ligands, modulates cell morphology and integrin-dependent cell adhesion through regulation of the Rac, Rap and Rho GTPases activity. Plays an important role in the development of the nervous system controlling different steps of axonal guidance including the establishment of the corticospinal projections. May also control the segregation of motor and sensory axons during neuromuscular circuit developmen. In addition to its role in axonal guidance plays a role in synaptic plasticity. Activated by EFNA1 phosphorylates CDK5 at 'Tyr-15' which in turn phosphorylates NGEF regulating RHOA and dendritic spine morphogenesis. In the nervous system, also plays a role in repair after injury preventing axonal regeneration and in angiogenesis playing a role in central nervous system vascular formation. Additionally, its promiscuity makes it available to participate in a variety of cell-cell signaling regulating for instance the development of the thymic epithelium. During development of the cochlear organ of Corti, regulates pillar cell separation by forming a ternary complex with ADAM10 and CADH1 which facilitates the cleavage of CADH1 by ADAM10 and disruption of adherens junctions. Phosphorylates CAPRIN1, promoting CAPRIN1-dependent formation of a membraneless compartment. The sequence is that of Ephrin type-A receptor 4 (Epha4) from Mus musculus (Mouse).